A 236-amino-acid polypeptide reads, in one-letter code: (5-formylfuran-3-yl)methyl phosphate synthase (236 aa).

Catalysis depends on Lys27, which acts as the Schiff-base intermediate with substrate. Lys85 acts as the Proton acceptor in catalysis.

It belongs to the MfnB family.

It catalyses the reaction 2 D-glyceraldehyde 3-phosphate = 4-(hydroxymethyl)-2-furancarboxaldehyde phosphate + phosphate + 2 H2O. It functions in the pathway cofactor biosynthesis; methanofuran biosynthesis. Catalyzes the formation of 4-(hydroxymethyl)-2-furancarboxaldehyde phosphate (4-HFC-P) from two molecules of glyceraldehyde-3-P (GA-3-P). The sequence is that of (5-formylfuran-3-yl)methyl phosphate synthase from Methanococcus maripaludis (strain C7 / ATCC BAA-1331).